The sequence spans 205 residues: Glycerol-3-phosphate acyltransferase (205 aa).

4 consecutive transmembrane segments (helical) span residues 4–24 (IAPG…AILV), 80–100 (PFWL…PIFF), 112–132 (FGAI…TWLL), and 138–158 (GYSS…VWWF).

It belongs to the PlsY family. In terms of assembly, probably interacts with PlsX.

It is found in the cell inner membrane. It carries out the reaction an acyl phosphate + sn-glycerol 3-phosphate = a 1-acyl-sn-glycero-3-phosphate + phosphate. It functions in the pathway lipid metabolism; phospholipid metabolism. Functionally, catalyzes the transfer of an acyl group from acyl-phosphate (acyl-PO(4)) to glycerol-3-phosphate (G3P) to form lysophosphatidic acid (LPA). This enzyme utilizes acyl-phosphate as fatty acyl donor, but not acyl-CoA or acyl-ACP. The chain is Glycerol-3-phosphate acyltransferase from Cronobacter sakazakii (strain ATCC BAA-894) (Enterobacter sakazakii).